The primary structure comprises 550 residues: Chaperonin GroEL (550 aa).

Residues 30-33, K51, 87-91, G415, 479-481, and D495 contribute to the ATP site; these read TLGP, DGTTT, and NAA.

The protein belongs to the chaperonin (HSP60) family. Forms a cylinder of 14 subunits composed of two heptameric rings stacked back-to-back. Interacts with the co-chaperonin GroES.

The protein localises to the cytoplasm. The catalysed reaction is ATP + H2O + a folded polypeptide = ADP + phosphate + an unfolded polypeptide.. Its function is as follows. Together with its co-chaperonin GroES, plays an essential role in assisting protein folding. The GroEL-GroES system forms a nano-cage that allows encapsulation of the non-native substrate proteins and provides a physical environment optimized to promote and accelerate protein folding. The polypeptide is Chaperonin GroEL (Burkholderia mallei (strain NCTC 10247)).